Here is a 79-residue protein sequence, read N- to C-terminus: Beta-defensin 15 (79 aa).

The first 20 residues, M1–A20, serve as a signal peptide directing secretion. 3 disulfide bridges follow: C26-C53, C33-C47, and C37-C54.

Belongs to the beta-defensin family. Expressed in testis and to a lesser extent in epididymis (caput, corpus and cauda). Also weakly expressed in kidneys and colon.

The protein resides in the secreted. Functionally, has antibacterial activity. The protein is Beta-defensin 15 (Defb15) of Mus musculus (Mouse).